The following is a 467-amino-acid chain: Argininosuccinate lyase (467 aa).

The protein belongs to the lyase 1 family. Argininosuccinate lyase subfamily.

It localises to the cytoplasm. The catalysed reaction is 2-(N(omega)-L-arginino)succinate = fumarate + L-arginine. It participates in amino-acid biosynthesis; L-arginine biosynthesis; L-arginine from L-ornithine and carbamoyl phosphate: step 3/3. This Rhizobium johnstonii (strain DSM 114642 / LMG 32736 / 3841) (Rhizobium leguminosarum bv. viciae) protein is Argininosuccinate lyase.